The following is a 109-amino-acid chain: uncharacterized protein (109 aa).

A helical membrane pass occupies residues 82 to 102; sequence SLSFLLLLFFYFNNYYFLSMT.

Its subcellular location is the membrane. This is an uncharacterized protein from Saccharomyces cerevisiae (strain ATCC 204508 / S288c) (Baker's yeast).